The primary structure comprises 95 residues: UPF0235 protein PTH_1821 (95 aa).

It belongs to the UPF0235 family.

The sequence is that of UPF0235 protein PTH_1821 from Pelotomaculum thermopropionicum (strain DSM 13744 / JCM 10971 / SI).